Consider the following 135-residue polypeptide: Actin-related protein 2/3 complex subunit 5B (135 aa).

It belongs to the ARPC5 family. Component of the Arp2/3 complex composed of ARP2, ARP3, ARPC1/p41-ARC, ARPC2/p34-ARC, ARPC3/p21-ARC, ARPC4/p20-ARC and ARPC5/p16-ARC.

The protein resides in the cytoplasm. Its subcellular location is the cytoskeleton. It localises to the cell projection. Functions as a component of the Arp2/3 complex which is involved in regulation of actin polymerization and together with an activating nucleation-promoting factor (NPF) mediates the formation of branched actin networks. Arp2/3 complex plays a critical role in the control of cell morphogenesis via the modulation of cell polarity development. The chain is Actin-related protein 2/3 complex subunit 5B (ARPC5B) from Arabidopsis thaliana (Mouse-ear cress).